The primary structure comprises 263 residues: Purine nucleoside phosphorylase SAV1187 (263 aa).

H79, C124, and H141 together coordinate Zn(2+).

Belongs to the purine nucleoside phosphorylase YfiH/LACC1 family. Homodimer. Cu(2+) serves as cofactor. The cofactor is Zn(2+).

It carries out the reaction adenosine + phosphate = alpha-D-ribose 1-phosphate + adenine. It catalyses the reaction S-methyl-5'-thioadenosine + phosphate = 5-(methylsulfanyl)-alpha-D-ribose 1-phosphate + adenine. The enzyme catalyses inosine + phosphate = alpha-D-ribose 1-phosphate + hypoxanthine. The catalysed reaction is adenosine + H2O + H(+) = inosine + NH4(+). Purine nucleoside enzyme that catalyzes the phosphorolysis of adenosine and inosine nucleosides, yielding D-ribose 1-phosphate and the respective free bases, adenine and hypoxanthine. Also catalyzes the phosphorolysis of S-methyl-5'-thioadenosine into adenine and S-methyl-5-thio-alpha-D-ribose 1-phosphate. Also has adenosine deaminase activity. The polypeptide is Purine nucleoside phosphorylase SAV1187 (Staphylococcus aureus (strain Mu50 / ATCC 700699)).